The primary structure comprises 129 residues: Probable cytochrome b5 2 (129 aa).

Positions 3–79 constitute a Cytochrome b5 heme-binding domain; sequence EKTITVEEVL…LEKFYIGNLL (77 aa). Heme-binding residues include His38 and His62. A helical transmembrane segment spans residues 105–125; it reads VKPAMWLFVLVMVVAYFAFRK.

It belongs to the cytochrome b5 family.

The protein resides in the endoplasmic reticulum membrane. It localises to the microsome membrane. It is found in the mitochondrion. Its function is as follows. Membrane bound hemoprotein which function as an electron carrier for several membrane bound oxygenases. The sequence is that of Probable cytochrome b5 2 (oca8) from Schizosaccharomyces pombe (strain 972 / ATCC 24843) (Fission yeast).